The following is a 61-amino-acid chain: MKYTEIKEKSVAELNALLKEKKVLLFTLKQKLKTMQLSNPNEIRALKKEIARINTAISASK.

This sequence belongs to the universal ribosomal protein uL29 family.

This Campylobacter curvus (strain 525.92) protein is Large ribosomal subunit protein uL29.